A 516-amino-acid chain; its full sequence is Probable metalloreductase AIM14 (516 aa).

The next 7 helical transmembrane spans lie at 18–38, 64–84, 97–117, 128–148, 168–188, 195–215, and 217–237; these read IGYGYYTFGVSVGYILLLLLL, LHLPILLLFLEIAFLGHYSVI, LSYVLLFLNIFLTLRPNYILS, HMWLSRAISTFGVFHGLAFVI, LLGFIVWILLIILLITSTGVI, SFYMVHQINAFAISFIVPVHA, and PGVALPYTITIAVLLGLHALA. Residues 94–207 enclose the Ferric oxidoreductase domain; that stretch reads LGRLSYVLLF…MVHQINAFAI (114 aa). In terms of domain architecture, FAD-binding FR-type spans 238–363; it reads RVSFCMSSAV…GGTGISLGLP (126 aa).

It belongs to the ferric reductase (FRE) family. AIM14 subfamily.

The protein resides in the membrane. Its function is as follows. Probable cell surface metalloreductase. May be involved in iron or copper homeostasis. The chain is Probable metalloreductase AIM14 (AIM14) from Eremothecium gossypii (strain ATCC 10895 / CBS 109.51 / FGSC 9923 / NRRL Y-1056) (Yeast).